We begin with the raw amino-acid sequence, 417 residues long: Snake venom metalloproteinase kistomin (417 aa).

A signal peptide spans 1 to 20 (MIEVLLVTICLAAFPYQGSS). Positions 21–189 (IILESGNVND…KKPFRLNLTP (169 aa)) are excised as a propeptide. In terms of domain architecture, Peptidase M12B spans 197–391 (AKVYLVIVAD…RKPECLFKKP (195 aa)). Intrachain disulfides connect Cys308–Cys386, Cys348–Cys370, and Cys350–Cys353. His333 is a Zn(2+) binding site. Glu334 is an active-site residue. Residues His337 and His343 each contribute to the Zn(2+) site. Residues 392-417 (LRTDTVSTPVSGNEPLEVITMDDFYA) constitute a propeptide that is removed on maturation.

It belongs to the venom metalloproteinase (M12B) family. P-I subfamily. As to quaternary structure, monomer. Zn(2+) serves as cofactor. As to expression, expressed by the venom gland.

The protein resides in the secreted. Its activity is regulated as follows. Inhibited by EDTA, and O-phenanthrolene. Its function is as follows. Snake venom zinc metalloprotease that inhibits platelet aggregation by binding specifically to platelet glycoprotein VI (GP6) and platelet glycoprotein Ib alpha (GP1BA). It inhibits the interaction between collagen and platelet GP6 by cleaving GP6 (at '225-Glu-|-Ala-226' and '238-Val-|-Phe-239' bonds), and inhibits vWF-induced platelet aggregation by cleaving GP1BA and vWF. Cleavage of GP1BA occurs at two distinct sites to generate two soluble fragments. It also cleaves alpha- (FGA) and subsequently the gamma-chain (FGG) of fibrinogen, leaving the beta-chain unaffected. It also inhibits collagen-, convulxin- and ristocetin-induced platelet aggregation. It blocks the adhesion of platelet to immobilized collagen, but only exerts a slight inhibition to fibrinogen. In vivo, it exerts potent antithrombotic effect. This Calloselasma rhodostoma (Malayan pit viper) protein is Snake venom metalloproteinase kistomin.